Consider the following 2443-residue polypeptide: Spatacsin (2443 aa).

Ser-1955 carries the post-translational modification Phosphoserine.

As to quaternary structure, interacts with AP5Z1, AP5B1, AP5S1 and ZFYVE26. Expressed in all structures of brain, with a high expression in cerebellum. Expressed in cortical projection neurons.

It is found in the cytoplasm. The protein localises to the cytosol. Its subcellular location is the nucleus. The protein resides in the cell projection. It localises to the axon. It is found in the dendrite. Its function is as follows. May play a role in neurite plasticity by maintaining cytoskeleton stability and regulating synaptic vesicle transport. The polypeptide is Spatacsin (SPG11) (Homo sapiens (Human)).